The chain runs to 1685 residues: Collagen alpha-5(IV) chain (1685 aa).

A signal peptide spans 1 to 26 (MKLRGVSLAAGLFLLALSLWGQPAEA). The nonhelical region (NC2) stretch occupies residues 27–41 (AACYGCSPGSKCDCS). The triple-helical region stretch occupies residues 42 to 1456 (GIKGEKGERG…QGPPGPPGTS (1415 aa)). The tract at residues 49 to 1459 (ERGFPGLEGH…PGPPGTSSVA (1411 aa)) is disordered. The span at 52-61 (FPGLEGHPGL) shows a compositional bias: low complexity. A compositionally biased stretch (pro residues) spans 62–73 (PGFPGPEGPPGP). Residue asparagine 125 is glycosylated (N-linked (GlcNAc...) asparagine). Over residues 188–212 (TGIPGPIGPPGPPGLMGPPGPPGLP) the composition is skewed to pro residues. Over residues 214–225 (PKGNMGLNFQGP) the composition is skewed to low complexity. Residues 246–257 (EQKRPIDVEFQK) show a composition bias toward basic and acidic residues. The span at 266–281 (RGPPGPPGIRGPPGPP) shows a compositional bias: pro residues. Basic and acidic residues-rich tracts occupy residues 284–305 (EKGE…KDGE) and 324–333 (PGRDGEKGQK). Over residues 413 to 430 (PPGISIPGPPGLDGQPGA) the composition is skewed to low complexity. Pro residues-rich tracts occupy residues 431–445 (PGLP…PHIP), 493–505 (PGQP…PGPP), 620–630 (MGPPGFGPPGP), and 709–727 (PGPP…PGAP). The segment covering 788 to 797 (RTGLDGLPGP) has biased composition (low complexity). 2 stretches are compositionally biased toward pro residues: residues 848 to 859 (PGPPGLDVPGPP) and 868 to 880 (PGAP…PGSP). 5 stretches are compositionally biased toward low complexity: residues 882–901 (LPGK…MGMM), 912–931 (IPGR…QGQP), 983–999 (YQGL…SGQP), 1010–1026 (NPGL…PGLK), and 1111–1120 (TPGAKGQPGL). The segment covering 1139–1148 (PGNPGLPGEP) has biased composition (pro residues). Composition is skewed to gly residues over residues 1149 to 1158 (GPVGGGGHPG) and 1202 to 1211 (GQKGDGGLPG). Pro residues-rich tracts occupy residues 1234–1243 (QGPPGPPGSP) and 1256–1274 (PQGP…PPGL). Residues 1295-1308 (LPGLKGDQGPPGLQ) show a composition bias toward low complexity. Positions 1353-1362 (IGPPGPPGLP) are enriched in pro residues. Positions 1461–1685 (GFLITRHSQT…SRCQVCMKRT (225 aa)) constitute a Collagen IV NC1 domain. 6 cysteine pairs are disulfide-bonded: cysteine 1476–cysteine 1567, cysteine 1509–cysteine 1564, cysteine 1521–cysteine 1527, cysteine 1586–cysteine 1681, cysteine 1620–cysteine 1678, and cysteine 1632–cysteine 1638. Residue methionine 1549 forms an S-Lysyl-methionine sulfilimine (Met-Lys) (interchain with K-1667) linkage. Residue lysine 1667 forms an S-Lysyl-methionine sulfilimine (Lys-Met) (interchain with M-1549) linkage.

It belongs to the type IV collagen family. There are six type IV collagen isoforms, alpha 1(IV)-alpha 6(IV), each of which can form a triple helix structure with 2 other chains to generate type IV collagen network. In terms of processing, prolines at the third position of the tripeptide repeating unit (G-X-Y) are hydroxylated in some or all of the chains. Type IV collagens contain numerous cysteine residues which are involved in inter- and intramolecular disulfide bonding. 12 of these, located in the NC1 domain, are conserved in all known type IV collagens. Post-translationally, the trimeric structure of the NC1 domains is stabilized by covalent bonds between Lys and Met residues. In terms of tissue distribution, isoform 2 is found in kidney.

Its subcellular location is the secreted. It is found in the extracellular space. The protein resides in the extracellular matrix. The protein localises to the basement membrane. Functionally, type IV collagen is the major structural component of glomerular basement membranes (GBM), forming a 'chicken-wire' meshwork together with laminins, proteoglycans and entactin/nidogen. This chain is Collagen alpha-5(IV) chain (COL4A5), found in Homo sapiens (Human).